A 432-amino-acid polypeptide reads, in one-letter code: Chaperone SurA (432 aa).

Positions 1–26 (MKKIASFCSAAVLIASSFLLNNTVQA) are cleaved as a signal peptide. 2 PpiC domains span residues 176-277 (QTEY…KVQD) and 286-386 (VQEV…EVTG).

The protein resides in the periplasm. It catalyses the reaction [protein]-peptidylproline (omega=180) = [protein]-peptidylproline (omega=0). In terms of biological role, chaperone involved in the correct folding and assembly of outer membrane proteins. Recognizes specific patterns of aromatic residues and the orientation of their side chains, which are found more frequently in integral outer membrane proteins. May act in both early periplasmic and late outer membrane-associated steps of protein maturation. The polypeptide is Chaperone SurA (Idiomarina loihiensis (strain ATCC BAA-735 / DSM 15497 / L2-TR)).